Here is a 76-residue protein sequence, read N- to C-terminus: Acyl carrier protein (76 aa).

Residues 1–76 (MSIEERVKKI…SAIDYVQNNQ (76 aa)) form the Carrier domain. Ser-36 carries the post-translational modification O-(pantetheine 4'-phosphoryl)serine.

The protein belongs to the acyl carrier protein (ACP) family. Post-translationally, 4'-phosphopantetheine is transferred from CoA to a specific serine of apo-ACP by AcpS. This modification is essential for activity because fatty acids are bound in thioester linkage to the sulfhydryl of the prosthetic group.

The protein resides in the cytoplasm. Its pathway is lipid metabolism; fatty acid biosynthesis. Its function is as follows. Carrier of the growing fatty acid chain in fatty acid biosynthesis. In Pasteurella multocida (strain Pm70), this protein is Acyl carrier protein.